A 293-amino-acid polypeptide reads, in one-letter code: Foldase protein PrsA 2 (293 aa).

The first 20 residues, 1-20 (MKKKLILGLVMMMALFSLAA), serve as a signal peptide directing secretion. Cys21 carries N-palmitoyl cysteine lipidation. Cys21 is lipidated: S-diacylglycerol cysteine. The region spanning 135-226 (QPDITVSHIL…YGYHIIQMDK (92 aa)) is the PpiC domain.

Belongs to the PrsA family.

The protein localises to the cell membrane. The enzyme catalyses [protein]-peptidylproline (omega=180) = [protein]-peptidylproline (omega=0). In terms of biological role, plays a major role in protein secretion by helping the post-translocational extracellular folding of several secreted proteins. The protein is Foldase protein PrsA 2 of Listeria monocytogenes serotype 4b (strain F2365).